The primary structure comprises 430 residues: Oleandomycin glycosyltransferase (430 aa).

A disordered region spans residues Gly-385–Leu-430. Basic and acidic residues predominate over residues Gly-386 to Gly-409.

It belongs to the UDP-glycosyltransferase family.

In terms of biological role, specifically inactivates oleandomycin via 2'-O-glycosylation using UDP-glucose. The polypeptide is Oleandomycin glycosyltransferase (oleD) (Streptomyces antibioticus).